Consider the following 106-residue polypeptide: Large ribosomal subunit protein uL24 (106 aa).

The protein belongs to the universal ribosomal protein uL24 family. In terms of assembly, part of the 50S ribosomal subunit.

One of two assembly initiator proteins, it binds directly to the 5'-end of the 23S rRNA, where it nucleates assembly of the 50S subunit. Its function is as follows. One of the proteins that surrounds the polypeptide exit tunnel on the outside of the subunit. This Erythrobacter litoralis (strain HTCC2594) protein is Large ribosomal subunit protein uL24.